Consider the following 451-residue polypeptide: Phosphoglucosamine mutase (451 aa).

Ser102 functions as the Phosphoserine intermediate in the catalytic mechanism. Residues Ser102, Asp243, Asp245, and Asp247 each contribute to the Mg(2+) site. A Phosphoserine modification is found at Ser102.

This sequence belongs to the phosphohexose mutase family. Mg(2+) is required as a cofactor. Post-translationally, activated by phosphorylation.

It carries out the reaction alpha-D-glucosamine 1-phosphate = D-glucosamine 6-phosphate. Catalyzes the conversion of glucosamine-6-phosphate to glucosamine-1-phosphate. The protein is Phosphoglucosamine mutase of Brucella abortus (strain 2308).